A 158-amino-acid chain; its full sequence is Large ribosomal subunit protein uL15 (158 aa).

This sequence belongs to the universal ribosomal protein uL15 family. In terms of assembly, part of the 50S ribosomal subunit.

Functionally, binds to the 23S rRNA. The sequence is that of Large ribosomal subunit protein uL15 from Aeropyrum pernix (strain ATCC 700893 / DSM 11879 / JCM 9820 / NBRC 100138 / K1).